The following is a 1265-amino-acid chain: Dynactin subunit 1 (1265 aa).

A CAP-Gly domain is found at 27–69 (GMTSFAVGKWVGVVLDEPKGKNSGSIKGQQYFQCDENCGMFVR). Residues 81–179 (GSRRSIEDVS…GNGAASHASS (99 aa)) are disordered. 5 positions are modified to phosphoserine: serine 85, serine 110, serine 114, serine 117, and serine 121. Low complexity-rich tracts occupy residues 103 to 138 (RLSSSRTSLSSSRQSLLGSRTQLTTSLSERTASSSS) and 161 to 177 (AEGAPAASGGNGAASHA). Serine 183 bears the Phosphoserine mark. 3 coiled-coil regions span residues 213 to 570 (NSGA…ESLQ), 812 to 836 (LIQFLNENMESVRQQVKLIKRRLPS), and 967 to 1084 (QRAQ…NSTT). The disordered stretch occupies residues 1082 to 1106 (STTGKVQPGSESHSPHNISLSGNTS). Serine 1117 carries the post-translational modification Phosphoserine. The stretch at 1128–1160 (EEVELLKNAFNQERNQRLRLQAQDMRAKLSQFE) forms a coiled coil.

It belongs to the dynactin 150 kDa subunit family. Monomer and homodimer. Subunit of dynactin, a multiprotein complex part of a tripartite complex with dynein and a adapter, such as BICDL1, BICD2 or HOOK3. The dynactin complex is built around ACTR1A/ACTB filament and consists of an actin-related filament composed of a shoulder domain, a pointed end and a barbed end. Its length is defined by its flexible shoulder domain. The soulder is composed of 2 DCTN1 subunits, 4 DCTN2 and 2 DCTN3. DCTN1/p150(glued) binds directly to microtubules and to cytoplasmic dynein.

It localises to the cytoplasm. The protein localises to the cytoskeleton. In terms of biological role, part of the dynactin complex that activates the molecular motor dynein for ultra-processive transport along microtubules. Plays a key role in dynein-mediated retrograde transport of vesicles and organelles along microtubules by recruiting and tethering dynein to microtubules. Binds to both dynein and microtubules providing a link between specific cargos, microtubules and dynein. Essential for targeting dynein to microtubule plus ends, recruiting dynein to membranous cargos and enhancing dynein processivity (the ability to move along a microtubule for a long distance without falling off the track). Can also act as a brake to slow the dynein motor during motility along the microtubule. Can regulate microtubule stability by promoting microtubule formation, nucleation and polymerization and by inhibiting microtubule catastrophe in neurons. Inhibits microtubule catastrophe by binding both to microtubules and to tubulin, leading to enhanced microtubule stability along the axon. Plays a role in metaphase spindle orientation. Plays a role in centriole cohesion and subdistal appendage organization and function. Its recruitment to the centriole in a KIF3A-dependent manner is essential for the maintenance of centriole cohesion and the formation of subdistal appendage. Also required for microtubule anchoring at the mother centriole. Plays a role in primary cilia formation. The protein is Dynactin subunit 1 of Drosophila melanogaster (Fruit fly).